The chain runs to 1220 residues: MGDMANNSVAYSGVKNSLKEANHDGDFGITLAELRALMELRSTDALRKIQESYGDVYGICTKLKTSPNEGLSGNPADLERREAVFGKNFIPPKKPKTFLQLVWEALQDVTLIILEIAAIVSLGLSFYQPPEGDNALCGEVSVGEEEGEGETGWIEGAAILLSVVCVVLVTAFNDWSKEKQFRGLQSRIEQEQKFTVIRGGQVIQIPVADITVGDIAQVKYGDLLPADGILIQGNDLKIDESSLTGESDHVKKSLDKDPLLLSGTHVMEGSGRMVVTAVGVNSQTGIIFTLLGAGGEEEEKKDEKKKEKKNKKQDGAIENRNKAKAQDGAAMEMQPLKSEEGGDGDEKDKKKANLPKKEKSVLQGKLTKLAVQIGKAGLLMSAITVIILVLYFVIDTFWVQKRPWLAECTPIYIQYFVKFFIIGVTVLVVAVPEGLPLAVTISLAYSVKKMMKDNNLVRHLDACETMGNATAICSDKTGTLTMNRMTVVQAYINEKHYKKVPEPEAIPPNILSYLVTGISVNCAYTSKILPPEKEGGLPRHVGNKTECALLGLLLDLKRDYQDVRNEIPEEALYKVYTFNSVRKSMSTVLKNSDGSYRIFSKGASEIILKKCFKILSANGEAKVFRPRDRDDIVKTVIEPMASEGLRTICLAFRDFPAGEPEPEWDNENDIVTGLTCIAVVGIEDPVRPEVPDAIKKCQRAGITVRMVTGDNINTARAIATKCGILHPGEDFLCLEGKDFNRRIRNEKGEIEQERIDKIWPKLRVLARSSPTDKHTLVKGIIDSTVSDQRQVVAVTGDGTNDGPALKKADVGFAMGIAGTDVAKEASDIILTDDNFTSIVKAVMWGRNVYDSISKFLQFQLTVNVVAVIVAFTGACITQDSPLKAVQMLWVNLIMDTLASLALATEPPTESLLLRKPYGRNKPLISRTMMKNILGHAFYQLVVVFTLLFAGEKFFDIDSGRNAPLHAPPSEHYTIVFNTFVLMQLFNEINARKIHGERNVFEGIFNNAIFCTIVLGTFVVQIIIVQFGGKPFSCSELSIEQWLWSIFLGMGTLLWGQLISTIPTSRLKFLKEAGHGTQKEEIPEEELAEDVEEIDHAERELRRGQILWFRGLNRIQTQIRVVNAFRSSLYEGLEKPESRSSIHNFMTHPEFRIEDSEPHIPLIDDTDAEDDAPTKRNSSPPPSPNKNNNAVDSGIHLTIEMNKSATSSSPGSPLHSLETSL.

At glycine 2 the chain carries N-acetylglycine. Topologically, residues glycine 2 to alanine 105 are cytoplasmic. Phosphoserine is present on residues serine 8 and serine 17. The helical transmembrane segment at leucine 106 to phenylalanine 126 threads the bilayer. The Extracellular segment spans residues tyrosine 127–isoleucine 154. Residues glutamate 155 to tryptophan 175 traverse the membrane as a helical segment. The Cytoplasmic portion of the chain corresponds to serine 176–leucine 366. Positions glutamate 297–lysine 356 are disordered. Basic and acidic residues-rich tracts occupy residues lysine 312–alanine 325 and lysine 337–lysine 356. The residue at position 338 (serine 338) is a Phosphoserine. A helical membrane pass occupies residues threonine 367–isoleucine 386. Residues isoleucine 387–lysine 418 lie on the Extracellular side of the membrane. A helical transmembrane segment spans residues phenylalanine 419–valine 439. Residues threonine 440–phenylalanine 855 lie on the Cytoplasmic side of the membrane. Aspartate 475 serves as the catalytic 4-aspartylphosphate intermediate. Mg(2+) is bound by residues aspartate 475, threonine 477, and aspartate 797. Residues leucine 856–isoleucine 876 traverse the membrane as a helical segment. Residues threonine 877–leucine 882 are Extracellular-facing. The chain crosses the membrane as a helical span at residues lysine 883–alanine 903. The Cytoplasmic segment spans residues threonine 904–threonine 927. Residues methionine 928–phenylalanine 948 form a helical membrane-spanning segment. The Extracellular segment spans residues alanine 949–histidine 971. The helical transmembrane segment at tyrosine 972 to arginine 991 threads the bilayer. The Cytoplasmic segment spans residues lysine 992 to asparagine 1005. A helical transmembrane segment spans residues asparagine 1006–glycine 1027. The Extracellular segment spans residues glycine 1028–glutamate 1039. The chain crosses the membrane as a helical span at residues glutamine 1040 to threonine 1060. Topologically, residues isoleucine 1061–leucine 1220 are cytoplasmic. The calmodulin-binding subdomain A stretch occupies residues leucine 1100–glutamine 1117. The residue at position 1116 (threonine 1116) is a Phosphothreonine; by PKC. The tract at residues isoleucine 1118–leucine 1220 is required for basolateral membrane targeting. Phosphoserine is present on residues serine 1140 and serine 1155. The tract at residues proline 1160–leucine 1220 is disordered. At threonine 1165 the chain carries Phosphothreonine. Serine 1178 bears the Phosphoserine; by PKA mark. Serine 1182 carries the post-translational modification Phosphoserine. A compositionally biased stretch (polar residues) spans methionine 1200 to leucine 1220.

This sequence belongs to the cation transport ATPase (P-type) (TC 3.A.3) family. Type IIB subfamily. As to quaternary structure, monomer. Dimer. Oligomer. Calmodulin binding. Interacts with PDZD11. Interacts with SLC35G1 and STIM1; inhibits calcium-transporting ATPase activity after store depletion. Interacts with YWHAE; interacts with the monomeric and dimeric forms of the YWHAE but prefer the monomer form; this interaction inhibits calcium-transporting ATPase activity. Interacts with NPTN; this interaction stabilizes ATP2B1 and increases ATPase activity; this interaction controls T cell calcium homeostasis following T cell activation. Interacts with EPB41; regulates small intestinal calcium absorption through regulation of membrane expression of ATP2B1. As to expression, isoform B: Ubiquitously expressed. Isoform C: Found in brain cortex, skeletal muscle and heart muscle. Isoform D: Has only been found in fetal skeletal muscle. Isoform K: Found in small intestine and liver. Abundantly expressed in the endometrial epithelial cells and glandular epithelial cells in early-proliferative phase and early-secretory phases.

The protein localises to the cell membrane. It localises to the basolateral cell membrane. It is found in the synapse. The protein resides in the presynaptic cell membrane. Its subcellular location is the cytoplasmic vesicle. The protein localises to the secretory vesicle. It localises to the synaptic vesicle membrane. It catalyses the reaction Ca(2+)(in) + ATP + H2O = Ca(2+)(out) + ADP + phosphate + H(+). Its function is as follows. Catalyzes the hydrolysis of ATP coupled with the transport of calcium from the cytoplasm to the extracellular space thereby maintaining intracellular calcium homeostasis. Plays a role in blood pressure regulation through regulation of intracellular calcium concentration and nitric oxide production leading to regulation of vascular smooth muscle cells vasoconstriction. Positively regulates bone mineralization through absorption of calcium from the intestine. Plays dual roles in osteoclast differentiation and survival by regulating RANKL-induced calcium oscillations in preosteoclasts and mediating calcium extrusion in mature osteoclasts. Regulates insulin sensitivity through calcium/calmodulin signaling pathway by regulating AKT1 activation and NOS3 activation in endothelial cells. May play a role in synaptic transmission by modulating calcium and proton dynamics at the synaptic vesicles. The protein is Plasma membrane calcium-transporting ATPase 1 of Homo sapiens (Human).